Consider the following 477-residue polypeptide: Acetolactate synthase small subunit 2, chloroplastic (477 aa).

The transit peptide at 1–53 directs the protein to the chloroplast; the sequence is MAATTTATSLFSSRLHFQNQNQGYGFPAKTPNSLQVNQIIDGRKMRNATVLSA. ACT domains are found at residues 78-150 and 309-383; these read TISV…DLSK and TLSL…NITH. L-valine-binding residues include D85, I89, I90, N103, I104, N316, V320, L321, N334, and I335.

It belongs to the acetolactate synthase small subunit family. The acetolactate synthase complex contains 4 homodimers of the large catalytic subunits, and 1 homotetramer of the small regulatory subunits. As to expression, expressed in roots in the vascular tissuem in cells around the quiescent center, in floral organs at the tips of young siliques and in the joint region between the silique and the pedicel. Barely detectable in mature leaves or siliques.

The protein localises to the plastid. Its subcellular location is the chloroplast. It localises to the peroxisome. The protein operates within amino-acid biosynthesis; L-isoleucine biosynthesis; L-isoleucine from 2-oxobutanoate: step 1/4. It functions in the pathway amino-acid biosynthesis; L-valine biosynthesis; L-valine from pyruvate: step 1/4. Its function is as follows. Regulatory subunit of acetohydroxy-acid synthase. Involved in the feed-back inhibition by branched-chain amino acids but not in herbicide tolerance. May play a role in valine and isoleucine-mediated feedback inhibition in roots. In vitro, inhibited by valine, but not leucine or isoleucine. Required for reproductive development and sodium homeostasis. The polypeptide is Acetolactate synthase small subunit 2, chloroplastic (Arabidopsis thaliana (Mouse-ear cress)).